Consider the following 118-residue polypeptide: DNA-directed RNA polymerase subunit omega (118 aa).

The interval D78 to E104 is disordered.

It belongs to the RNA polymerase subunit omega family. The RNAP catalytic core consists of 2 alpha, 1 beta, 1 beta' and 1 omega subunit. When a sigma factor is associated with the core the holoenzyme is formed, which can initiate transcription.

It carries out the reaction RNA(n) + a ribonucleoside 5'-triphosphate = RNA(n+1) + diphosphate. Promotes RNA polymerase assembly. Latches the N- and C-terminal regions of the beta' subunit thereby facilitating its interaction with the beta and alpha subunits. The chain is DNA-directed RNA polymerase subunit omega from Dinoroseobacter shibae (strain DSM 16493 / NCIMB 14021 / DFL 12).